A 522-amino-acid polypeptide reads, in one-letter code: Occludin (522 aa).

Residues Met-1 to Asn-20 are disordered. Residues Met-1–Arg-66 lie on the Cytoplasmic side of the membrane. In terms of domain architecture, MARVEL spans Ser-60 to Arg-269. The helical transmembrane segment at Ile-67–Trp-89 threads the bilayer. At Asp-90–Arg-135 the chain is on the extracellular side. A helical transmembrane segment spans residues Ala-136–Val-160. The Cytoplasmic portion of the chain corresponds to Ile-161–Arg-170. A helical transmembrane segment spans residues Tyr-171–Met-195. At Gly-196–Glu-243 the chain is on the extracellular side. Cysteines 216 and 237 form a disulfide. A helical membrane pass occupies residues Ala-244–Val-265. Residues Lys-266–Thr-522 are Cytoplasmic-facing. Ser-302 carries the post-translational modification Phosphoserine. Thr-305 carries the post-translational modification Phosphothreonine. Phosphoserine is present on residues Ser-313, Ser-321, and Ser-340. The segment at Val-360–Glu-407 is disordered. The segment covering Arg-367–Thr-376 has biased composition (polar residues). The residue at position 368 (Tyr-368) is a Phosphotyrosine. Ser-369 and Ser-370 each carry phosphoserine. Residues Ala-381–Ser-390 show a composition bias toward basic residues. Residues Lys-391–Thr-400 are compositionally biased toward basic and acidic residues. Phosphotyrosine occurs at positions 398 and 402. Phosphothreonine; by PKC/PRKCH is present on residues Thr-403 and Thr-404. Ser-408 carries the phosphoserine modification. In terms of domain architecture, OCEL spans Glu-414 to Thr-522. Positions Asp-426–Gly-489 form a coiled coil. Residue Ser-490 is modified to Phosphoserine.

Belongs to the ELL/occludin family. In terms of assembly, interacts with TJP1/ZO1. Interacts with VAPA. Interacts with CLDN1, CLDN6, CLDN9, CLDN11, CLDN12 and CLDN17. Interacts with PLSCR1. Interacts with LSR, ILDR1 and ILDR2. Interacts with TJP2/ZO2. Post-translationally, dephosphorylated by PTPRJ. The tyrosine phosphorylation on Tyr-398 and Tyr-402 reduces its ability to interact with TJP1. Phosphorylation at Ser-490 also attenuates the interaction with TJP1. (Microbial infection) Cleaved by S.pyogenes SpeB protease; leading to its degradation. Degradation by SpeB promotes bacterial translocation across the host epithelial barrier. Localized at tight junctions of both epithelial and endothelial cells. Highly expressed in kidney. Not detected in testis.

The protein localises to the cell membrane. It localises to the cell junction. Its subcellular location is the tight junction. May play a role in the formation and regulation of the tight junction (TJ) paracellular permeability barrier. It is able to induce adhesion when expressed in cells lacking tight junctions. In terms of biological role, (Microbial infection) Acts as a coreceptor for hepatitis C virus (HCV) in hepatocytes. The sequence is that of Occludin (OCLN) from Homo sapiens (Human).